A 116-amino-acid chain; its full sequence is NADH-ubiquinone oxidoreductase chain 3 (116 aa).

A run of 3 helical transmembrane segments spans residues 3–23 (LITT…TISF), 56–76 (FFLI…LLPL), and 87–107 (LTLI…IYEW).

Belongs to the complex I subunit 3 family.

The protein localises to the mitochondrion membrane. It catalyses the reaction a ubiquinone + NADH + 5 H(+)(in) = a ubiquinol + NAD(+) + 4 H(+)(out). Core subunit of the mitochondrial membrane respiratory chain NADH dehydrogenase (Complex I) that is believed to belong to the minimal assembly required for catalysis. Complex I functions in the transfer of electrons from NADH to the respiratory chain. The immediate electron acceptor for the enzyme is believed to be ubiquinone. This chain is NADH-ubiquinone oxidoreductase chain 3 (MT-ND3), found in Oncorhynchus gorbuscha (Pink salmon).